The sequence spans 70 residues: Sec-independent protein translocase protein TatA (70 aa).

A helical transmembrane segment spans residues 1–21 (MFGLGGQELILILLIILLLFG). Residues 50–62 (FNKVVDEPPRKTP) are compositionally biased toward basic and acidic residues. The tract at residues 50 to 70 (FNKVVDEPPRKTPENSTGSKS) is disordered.

The protein belongs to the TatA/E family. Forms a complex with TatC.

The protein localises to the cell inner membrane. Functionally, part of the twin-arginine translocation (Tat) system that transports large folded proteins containing a characteristic twin-arginine motif in their signal peptide across membranes. TatA could form the protein-conducting channel of the Tat system. The sequence is that of Sec-independent protein translocase protein TatA from Chlorobium limicola (strain DSM 245 / NBRC 103803 / 6330).